The sequence spans 501 residues: Acetyl-coenzyme A carboxylase carboxyl transferase subunit beta, chloroplastic (501 aa).

The CoA carboxyltransferase N-terminal domain maps to 231-501 (LWIECENCYG…LIQNEKESRS (271 aa)). Residues Cys235, Cys238, Cys254, and Cys257 each contribute to the Zn(2+) site. The C4-type zinc-finger motif lies at 235-257 (CENCYGLNYKKILKSKMNICEHC).

This sequence belongs to the AccD/PCCB family. As to quaternary structure, acetyl-CoA carboxylase is a heterohexamer composed of biotin carboxyl carrier protein, biotin carboxylase and 2 subunits each of ACCase subunit alpha and ACCase plastid-coded subunit beta (accD). It depends on Zn(2+) as a cofactor.

Its subcellular location is the plastid. The protein resides in the chloroplast stroma. The catalysed reaction is N(6)-carboxybiotinyl-L-lysyl-[protein] + acetyl-CoA = N(6)-biotinyl-L-lysyl-[protein] + malonyl-CoA. The protein operates within lipid metabolism; malonyl-CoA biosynthesis; malonyl-CoA from acetyl-CoA: step 1/1. In terms of biological role, component of the acetyl coenzyme A carboxylase (ACC) complex. Biotin carboxylase (BC) catalyzes the carboxylation of biotin on its carrier protein (BCCP) and then the CO(2) group is transferred by the transcarboxylase to acetyl-CoA to form malonyl-CoA. This is Acetyl-coenzyme A carboxylase carboxyl transferase subunit beta, chloroplastic from Lotus japonicus (Lotus corniculatus var. japonicus).